A 120-amino-acid chain; its full sequence is NAD(P)H-quinone oxidoreductase subunit 3, chloroplastic (120 aa).

3 consecutive transmembrane segments (helical) span residues 9-29, 64-84, and 88-108; these read IFWA…WISA, MFAL…PWAM, and VLGI…VVGL.

It belongs to the complex I subunit 3 family. As to quaternary structure, NDH is composed of at least 16 different subunits, 5 of which are encoded in the nucleus.

The protein localises to the plastid. It is found in the chloroplast thylakoid membrane. The catalysed reaction is a plastoquinone + NADH + (n+1) H(+)(in) = a plastoquinol + NAD(+) + n H(+)(out). It carries out the reaction a plastoquinone + NADPH + (n+1) H(+)(in) = a plastoquinol + NADP(+) + n H(+)(out). NDH shuttles electrons from NAD(P)H:plastoquinone, via FMN and iron-sulfur (Fe-S) centers, to quinones in the photosynthetic chain and possibly in a chloroplast respiratory chain. The immediate electron acceptor for the enzyme in this species is believed to be plastoquinone. Couples the redox reaction to proton translocation, and thus conserves the redox energy in a proton gradient. This chain is NAD(P)H-quinone oxidoreductase subunit 3, chloroplastic, found in Oryza nivara (Indian wild rice).